We begin with the raw amino-acid sequence, 1529 residues long: DNA-directed RNA polymerase subunit beta' (1529 aa).

Zn(2+) is bound by residues Cys156, Cys158, Cys183, and Cys186. Mg(2+) contacts are provided by Asp1328, Asp1330, and Asp1332.

This sequence belongs to the RNA polymerase beta' chain family. RpoC1 subfamily. In terms of assembly, in plastids the minimal PEP RNA polymerase catalytic core is composed of four subunits: alpha, beta, beta', and beta''. When a (nuclear-encoded) sigma factor is associated with the core the holoenzyme is formed, which can initiate transcription. Mg(2+) is required as a cofactor. Zn(2+) serves as cofactor.

It is found in the plastid. Its subcellular location is the chloroplast. The catalysed reaction is RNA(n) + a ribonucleoside 5'-triphosphate = RNA(n+1) + diphosphate. Its function is as follows. DNA-dependent RNA polymerase catalyzes the transcription of DNA into RNA using the four ribonucleoside triphosphates as substrates. This Tetradesmus obliquus (Green alga) protein is DNA-directed RNA polymerase subunit beta'.